Reading from the N-terminus, the 523-residue chain is Acetyl-CoA hydrolase (523 aa).

277-281 (GIGNI) provides a ligand contact to CoA. Glu302 acts as the 5-glutamyl coenzyme A thioester intermediate in catalysis. The CoA site is built by Asn392 and Gly396.

It belongs to the acetyl-CoA hydrolase/transferase family.

Its subcellular location is the cytoplasm. The catalysed reaction is acetyl-CoA + H2O = acetate + CoA + H(+). In terms of biological role, presumably involved in regulating the intracellular acetyl-CoA pool for fatty acid and cholesterol synthesis and fatty acid oxidation. This chain is Acetyl-CoA hydrolase (ACH1), found in Eremothecium gossypii (strain ATCC 10895 / CBS 109.51 / FGSC 9923 / NRRL Y-1056) (Yeast).